A 172-amino-acid polypeptide reads, in one-letter code: C-phycocyanin beta chain (172 aa).

Asn72 bears the N4-methylasparagine mark. (2R,3E)-phycocyanobilin-binding residues include Cys82 and Cys153.

This sequence belongs to the phycobiliprotein family. In terms of assembly, heterodimer of an alpha and a beta subunit, which further assembles into trimers and the trimers into hexamers. The basic functional unit of phycobiliproteins is a ring-shaped hexamer formed from two back-to-back trimers contacting via the alpha chain subunits. The trimers are composed of alpha/beta subunit heterodimers arranged around a three-fold axis of symmetry. The phycoerythrins also contain a gamma subunit which is located in the center of the hexamer. In terms of processing, contains two covalently linked bilin chromophores.

Its subcellular location is the plastid. It localises to the chloroplast thylakoid membrane. In terms of biological role, light-harvesting photosynthetic bile pigment-protein from the phycobiliprotein complex (phycobilisome, PBS). Phycocyanin is the major phycobiliprotein in the PBS rod. This is C-phycocyanin beta chain (cpcB) from Pyropia haitanensis (Red seaweed).